A 551-amino-acid polypeptide reads, in one-letter code: Alkaline nuclease (551 aa).

It belongs to the herpesviridae alkaline nuclease family. As to quaternary structure, interacts with major DNA-binding protein; this interaction increases the nuclease processivity of the alkaline exonuclease.

It is found in the host nucleus. The protein resides in the host cytoplasm. Plays a role in processing non linear or branched viral DNA intermediates in order to promote the production of mature packaged unit-length linear progeny viral DNA molecules. Exhibits endonuclease and exonuclease activities and accepts both double-stranded and single-stranded DNA as substrate. Exonuclease digestion of DNA is in the 5'-&gt; 3' direction and the products are 5'-monophosphate nucleosides. Additionally, forms a recombinase with the major DNA-binding protein, which displays strand exchange activity. The protein is Alkaline nuclease of Varicella-zoster virus (strain Oka vaccine) (HHV-3).